The sequence spans 367 residues: Epoxide hydrolase 3 (367 aa).

Residues 22-42 (ALVMSLVYLAALVAAFVYSCI) traverse the membrane as a helical segment. The Nucleophile role is filled by aspartate 180. Catalysis depends on tyrosine 288, which acts as the Proton donor. Residue histidine 344 is the Proton acceptor of the active site.

Belongs to the AB hydrolase superfamily. Epoxide hydrolase family. Predominantly expressed in skin, esophagus, lung and tongue and to a lesser extent in pancreas and eye.

The protein resides in the microsome membrane. The enzyme catalyses an epoxide + H2O = an ethanediol. The catalysed reaction is 9,10-epoxyoctadecanoate + H2O = 9,10-dihydroxyoctadecanoate. It carries out the reaction 9,10-epoxy-(12Z)-octadecenoate + H2O = 9,10-dihydroxy-(12Z)-octadecenoate. It catalyses the reaction 8,9-epoxy-(5Z,11Z,14Z)-eicosatrienoate + H2O = 8,9-dihydroxy-(5Z,11Z,14Z)-eicosatrienoate. The enzyme catalyses 11,12-epoxy-(5Z,8Z,14Z)-eicosatrienoate + H2O = 11,12-dihydroxy-(5Z,8Z,14Z)-eicosatrienoate. The catalysed reaction is 14,15-epoxy-(5Z,8Z,11Z)-eicosatrienoate + H2O = 14,15-dihydroxy-(5Z,8Z,11Z)-eicosatrienoate. With respect to regulation, inhibited by 1-(1-acetylpiperidin-4-yl)-3-(4-(trifl uoromethoxy)phenyl)urea (TPAU), 1-cyclohexyl-3-dodecylurea (CDU), 12-(3-adamantan-1-yl-ureido)-dodecanoic acid (AUDA), 1-((3S, 5S, 7S)-adamantan-1-yl)-3-(5-(2-(2-ethoxyethoxy) ethoxy)pentyl)urea (AEPU) and to a lesser extent by 8-(3-((3S, 5S, 7S)-adamantan-1-yl)ureido) octanoic acid (AUOA). Its function is as follows. Catalyzes the hydrolysis of epoxide-containing fatty acids. Active in vitro against epoxyeicosatrienoic acids (EETs) including 8,9-EET, 9,10-EET, 11,12-EET and 14,15-EET and leukotoxin. This chain is Epoxide hydrolase 3 (Ephx3), found in Mus musculus (Mouse).